Here is a 382-residue protein sequence, read N- to C-terminus: Alkanesulfonate monooxygenase (382 aa).

This sequence belongs to the SsuD family. Homotetramer.

The enzyme catalyses an alkanesulfonate + FMNH2 + O2 = an aldehyde + FMN + sulfite + H2O + 2 H(+). Its function is as follows. Catalyzes the desulfonation of aliphatic sulfonates. The sequence is that of Alkanesulfonate monooxygenase from Yersinia pseudotuberculosis serotype IB (strain PB1/+).